Here is a 326-residue protein sequence, read N- to C-terminus: Probable cell division protein WhiA (326 aa).

A DNA-binding region (H-T-H motif) is located at residues 275 to 308 (SLEELGALADPPLTKDAIAGRIRRLLALADKRAR).

The protein belongs to the WhiA family.

Its function is as follows. Involved in cell division and chromosome segregation. The polypeptide is Probable cell division protein WhiA (Salinispora arenicola (strain CNS-205)).